Here is a 252-residue protein sequence, read N- to C-terminus: 5'-nucleotidase SurE (252 aa).

Positions 8, 9, 39, and 91 each coordinate a divalent metal cation.

Belongs to the SurE nucleotidase family. It depends on a divalent metal cation as a cofactor.

The protein localises to the cytoplasm. It carries out the reaction a ribonucleoside 5'-phosphate + H2O = a ribonucleoside + phosphate. Nucleotidase that shows phosphatase activity on nucleoside 5'-monophosphates. The sequence is that of 5'-nucleotidase SurE from Legionella pneumophila (strain Corby).